Here is a 740-residue protein sequence, read N- to C-terminus: ATP-dependent RNA helicase DDX1 (740 aa).

An interaction with dsRNA region spans residues 1–448; sequence MAAFSEMGVM…ETVHHVVVIV (448 aa). The 427-residue stretch at 2–428 folds into the Helicase ATP-binding domain; that stretch reads AAFSEMGVMP…SEKIMHFPTW (427 aa). Residue 46–53 coordinates ATP; the sequence is AETGSGKT. The region spanning 70–247 is the B30.2/SPRY domain; it reads DQMEGKKGKA…LKFNFGEEDF (178 aa). Residues 370–373 carry the DEAD box motif; sequence DEAD. Residues 493-681 form the Helicase C-terminal domain; that stretch reads KGEYTVRAIK…QVEPDIKVPV (189 aa).

Belongs to the DEAD box helicase family. DDX1 subfamily. In terms of tissue distribution, detected in embryonic retina, brain, heart and liver (at protein level). Detected in embryonic retina, brain, heart, kidney and liver.

The protein localises to the nucleus. The protein resides in the cytoplasm. It is found in the cytoplasmic granule. It localises to the cytosol. Its subcellular location is the mitochondrion. The enzyme catalyses ATP + H2O = ADP + phosphate + H(+). Acts as an ATP-dependent RNA helicase, able to unwind both RNA-RNA and RNA-DNA duplexes. Possesses 5' single-stranded RNA overhang nuclease activity. Acts as a positive regulator of transcription. May be involved in 3'-end cleavage and polyadenylation of pre-mRNAs. Binds DNA and RNA. Component of the tRNA-splicing ligase complex required to facilitate the enzymatic turnover of catalytic subunit RTCB. Binds (via helicase ATP-binding domain) on both short and long poly(I:C) dsRNA. The sequence is that of ATP-dependent RNA helicase DDX1 (DDX1) from Gallus gallus (Chicken).